We begin with the raw amino-acid sequence, 325 residues long: Aquaporin-8 (325 aa).

Over 1-10 (MALRSPARDY) the chain is Cytoplasmic. The helical transmembrane segment at 11-31 (LVSMIGELVGTFLFLFFAFAA) threads the bilayer. The Extracellular portion of the chain corresponds to 32-52 (AQTANQPNGTKPLTPNATDTS). Residues Asn-39 and Asn-47 are each glycosylated (N-linked (GlcNAc...) asparagine). A helical membrane pass occupies residues 53 to 73 (KLLYIALAFGASLAANVWVFF). Over 74–100 (RVSGGQFNPAVTLALVLIRAVSPTKAL) the chain is Cytoplasmic. The NPA 1 signature appears at 81–83 (NPA). Residues 101-121 (ILIPAQLVGGSLAAAAVKGII) form a helical membrane-spanning segment. Residues 122-140 (PGDDILFAVSLGPGVANVQ) are Extracellular-facing. Residues 141–161 (GLFIELLLTFMLVFTILMLVA) form a helical membrane-spanning segment. Topologically, residues 162 to 167 (EKTKST) are cytoplasmic. A helical membrane pass occupies residues 168-188 (FVAPIGIGFSLFIGHLVGIFW). Topologically, residues 189–212 (TGAGINPARAFSPALIQASFPSYH) are extracellular. The NPA 2 motif lies at 194-196 (NPA). The helical transmembrane segment at 213 to 233 (WIYWLGPALGSFLAAGLYLGL) threads the bilayer. Residues 234-325 (KEMKYELVGG…GSPDSTDLPT (92 aa)) lie on the Cytoplasmic side of the membrane. 2 disordered regions span residues 279 to 298 (LGQF…LERG) and 305 to 325 (EDDP…DLPT). Residues 286-298 (TEGHRSPVDLERG) show a composition bias toward basic and acidic residues.

The protein belongs to the MIP/aquaporin (TC 1.A.8) family.

It localises to the cell membrane. The enzyme catalyses H2O2(out) = H2O2(in). It catalyses the reaction H2O(in) = H2O(out). Functionally, plasma membrane water channel that regulates the reactive oxygen species (ROS)-signaling pathway through its capacity to act as a membrane channel for hydrogen peroxide uptake. Required for the formation of infection structures and infection, especially on host leaves where it is essential for the penetration into the host. Regulates the expression of proteins related to redox-regulation and intracellular signal transduction and plays a role in the distribution of mitochondria in the hyphae. This chain is Aquaporin-8, found in Botryotinia fuckeliana (strain B05.10) (Noble rot fungus).